The primary structure comprises 189 residues: GTP cyclohydrolase 1 (189 aa).

3 residues coordinate Zn(2+): Cys-76, His-79, and Cys-149.

This sequence belongs to the GTP cyclohydrolase I family. As to quaternary structure, homomer.

The catalysed reaction is GTP + H2O = 7,8-dihydroneopterin 3'-triphosphate + formate + H(+). The protein operates within cofactor biosynthesis; 7,8-dihydroneopterin triphosphate biosynthesis; 7,8-dihydroneopterin triphosphate from GTP: step 1/1. This is GTP cyclohydrolase 1 from Dehalococcoides mccartyi (strain ATCC BAA-2100 / JCM 16839 / KCTC 5957 / BAV1).